Here is a 503-residue protein sequence, read N- to C-terminus: Maturase K (503 aa).

Belongs to the intron maturase 2 family. MatK subfamily.

It localises to the plastid. Its subcellular location is the chloroplast. In terms of biological role, usually encoded in the trnK tRNA gene intron. Probably assists in splicing its own and other chloroplast group II introns. This is Maturase K from Rosa californica (California wild rose).